The chain runs to 402 residues: S-adenosylmethionine synthase (402 aa).

ATP is bound at residue 140-145; the sequence is GNGSID.

The protein belongs to the AdoMet synthase 2 family. Mg(2+) serves as cofactor.

It catalyses the reaction L-methionine + ATP + H2O = S-adenosyl-L-methionine + phosphate + diphosphate. Its pathway is amino-acid biosynthesis; S-adenosyl-L-methionine biosynthesis; S-adenosyl-L-methionine from L-methionine: step 1/1. Its function is as follows. Catalyzes the formation of S-adenosylmethionine from methionine and ATP. This chain is S-adenosylmethionine synthase, found in Picrophilus torridus (strain ATCC 700027 / DSM 9790 / JCM 10055 / NBRC 100828 / KAW 2/3).